Here is a 210-residue protein sequence, read N- to C-terminus: V-type sodium ATPase subunit D (210 aa).

This sequence belongs to the V-ATPase D subunit family.

Its function is as follows. Involved in ATP-driven sodium extrusion. The chain is V-type sodium ATPase subunit D (ntpD) from Enterococcus hirae (strain ATCC 9790 / DSM 20160 / JCM 8729 / LMG 6399 / NBRC 3181 / NCIMB 6459 / NCDO 1258 / NCTC 12367 / WDCM 00089 / R).